The primary structure comprises 373 residues: uncharacterized protein (373 aa).

This is an uncharacterized protein from Saccharomyces cerevisiae (strain ATCC 204508 / S288c) (Baker's yeast).